Here is an 820-residue protein sequence, read N- to C-terminus: MSNNTEYTPVLRQYRALKEQYGECLLLYRLGDFYELFFEDAVIASKTLNIVLTKRGTDTPMCGVPYHSSESYIGRLVKSGYKVAVCEQIETAEEARKRSVRALVRREVTRIVTPGTLVEDSLLDAKENNYLACISNIGERYGVAWMELSTGLFHVRASKLEDLDSEIQRLGPSELLISDKLKEQQSMELVLKRHRCAITSHNESFFDSKRAEKVLCGVYGVTTVQGLGDFEEVEVSACGSLLEYVRMTQRGSLPKLSYPKVRDSNSFVLIDGPALRNLELFSTQSGEKKGSLISTIDHTVTAMGSRMLKRYLAFPVACHNVINGRQDAVEFFVSNRSLCEVIRGVINGFPDIERILTRVKFSKCSPKDIHLLGRALSKIFELSRIISRSTHAIISKILVSLGDHRDLLKLISEVMLENNATITKDGGFINPGCNERLAELARIQNDSGVLIQRLRDKYRALTGISSLKILSNNLLGYYIEVSSSYKVSDESFVRRQSLANSTRYTTAELKELEERIVSAQSESADLEAQIFKGLCSRIADECQDIGLAAEAVAELDVLTTLAEVAVENNYVRPIVDDSKQFKIVRGRHPVVEVGTDFIANDCDLSEGNSMSLITGPNMAGKSTFLRQNALIAVLAHIGSFVPAEHAHIGVIDKIFSRVGASDNIALGHSTFMVEMVETAAILNQATSKSLVILDEIGRGTAINDGLSIALAAIEHIHDVTKSRAICATHYHELPKLSSHFENIRFFCLRIEEWKGEVVFLHELIPGISSRSYGIHVAGLAGFPKGALERAKFFMSKFDEAEHYRSIDSIDITSGRHITDE.

ATP is bound at residue 615–622 (GPNMAGKS).

It belongs to the DNA mismatch repair MutS family.

Its function is as follows. This protein is involved in the repair of mismatches in DNA. It is possible that it carries out the mismatch recognition step. This protein has a weak ATPase activity. The sequence is that of DNA mismatch repair protein MutS from Anaplasma phagocytophilum (strain HZ).